The primary structure comprises 252 residues: 3-dehydroquinate dehydratase (252 aa).

3-dehydroquinate-binding positions include Ser21, 46–48 (EWR), and Arg82. The Proton donor/acceptor role is filled by His143. Lys170 functions as the Schiff-base intermediate with substrate in the catalytic mechanism. 3-dehydroquinate contacts are provided by Arg213, Ser232, and Gln236.

It belongs to the type-I 3-dehydroquinase family. Homodimer.

It carries out the reaction 3-dehydroquinate = 3-dehydroshikimate + H2O. It functions in the pathway metabolic intermediate biosynthesis; chorismate biosynthesis; chorismate from D-erythrose 4-phosphate and phosphoenolpyruvate: step 3/7. Involved in the third step of the chorismate pathway, which leads to the biosynthesis of aromatic amino acids. Catalyzes the cis-dehydration of 3-dehydroquinate (DHQ) and introduces the first double bond of the aromatic ring to yield 3-dehydroshikimate. The polypeptide is 3-dehydroquinate dehydratase (Salmonella choleraesuis (strain SC-B67)).